Consider the following 334-residue polypeptide: N-acetyl-gamma-glutamyl-phosphate reductase (334 aa).

Cys154 is an active-site residue.

This sequence belongs to the NAGSA dehydrogenase family. Type 1 subfamily.

The protein localises to the cytoplasm. It catalyses the reaction N-acetyl-L-glutamate 5-semialdehyde + phosphate + NADP(+) = N-acetyl-L-glutamyl 5-phosphate + NADPH + H(+). Its pathway is amino-acid biosynthesis; L-arginine biosynthesis; N(2)-acetyl-L-ornithine from L-glutamate: step 3/4. In terms of biological role, catalyzes the NADPH-dependent reduction of N-acetyl-5-glutamyl phosphate to yield N-acetyl-L-glutamate 5-semialdehyde. The polypeptide is N-acetyl-gamma-glutamyl-phosphate reductase (Yersinia pseudotuberculosis serotype I (strain IP32953)).